The following is a 150-amino-acid chain: uncharacterized protein (150 aa).

A Flavodoxin-like domain is found at 3–145 (VAILSGSVYG…DAEPWLAEFA (143 aa)).

The protein belongs to the flavodoxin family. MioC subfamily. The cofactor is FMN.

Functionally, probable electron transporter. This is an uncharacterized protein from Pseudomonas aeruginosa (strain ATCC 15692 / DSM 22644 / CIP 104116 / JCM 14847 / LMG 12228 / 1C / PRS 101 / PAO1).